Consider the following 173-residue polypeptide: Chorion protein S19 (173 aa).

The first 21 residues, 1–21 (MNKFATLAVIFCACIVGSCYA), serve as a signal peptide directing secretion.

Belongs to the chorion protein S19 family.

It localises to the secreted. Functionally, chorion membrane (egg shell) protein; plays a role in protecting the egg from the environment. This Drosophila melanogaster (Fruit fly) protein is Chorion protein S19 (Cp19).